Consider the following 292-residue polypeptide: ATP phosphoribosyltransferase (292 aa).

This sequence belongs to the ATP phosphoribosyltransferase family. Long subfamily. It depends on Mg(2+) as a cofactor.

It localises to the cytoplasm. The catalysed reaction is 1-(5-phospho-beta-D-ribosyl)-ATP + diphosphate = 5-phospho-alpha-D-ribose 1-diphosphate + ATP. Its pathway is amino-acid biosynthesis; L-histidine biosynthesis; L-histidine from 5-phospho-alpha-D-ribose 1-diphosphate: step 1/9. Its activity is regulated as follows. Feedback inhibited by histidine. In terms of biological role, catalyzes the condensation of ATP and 5-phosphoribose 1-diphosphate to form N'-(5'-phosphoribosyl)-ATP (PR-ATP). Has a crucial role in the pathway because the rate of histidine biosynthesis seems to be controlled primarily by regulation of HisG enzymatic activity. This chain is ATP phosphoribosyltransferase, found in Desulfatibacillum aliphaticivorans.